Here is a 324-residue protein sequence, read N- to C-terminus: PTS system glucose-specific EIICBA component (324 aa).

Residues 1-63 form the PTS EIIC type-1 domain; sequence HLLNVKIGMT…KWDLATPGRE (63 aa). Helical transmembrane passes span 5 to 25 and 28 to 48; these read VKIG…GVLP and TAWW…YFGF. One can recognise a PTS EIIB type-1 domain in the interval 78 to 159; it reads GDLPYEVLAA…QDIMQGKAPA (82 aa). Cysteine 100 serves as the catalytic Phosphocysteine intermediate; for EIIB activity. Residues 156-177 are disordered; sequence KAPARAEEKPKTAASEAAESET. Positions 167–177 are enriched in low complexity; the sequence is TAASEAAESET. One can recognise a PTS EIIA type-1 domain in the interval 194–298; that stretch reads DQVFSQKMMG…SIVTPVIFTN (105 aa). Catalysis depends on histidine 246, which acts as the Tele-phosphohistidine intermediate; for EIIA activity.

The protein resides in the cell membrane. The catalysed reaction is N(pros)-phospho-L-histidyl-[protein] + D-glucose(out) = D-glucose 6-phosphate(in) + L-histidyl-[protein]. Functionally, the phosphoenolpyruvate-dependent sugar phosphotransferase system (sugar PTS), a major carbohydrate active transport system, catalyzes the phosphorylation of incoming sugar substrates concomitantly with their translocation across the cell membrane. This system is involved in glucose transport. The chain is PTS system glucose-specific EIICBA component (ptsG) from Geobacillus stearothermophilus (Bacillus stearothermophilus).